The following is a 280-amino-acid chain: Probable endonuclease 4 (280 aa).

Residues His69, His109, Glu145, Asp179, His182, His216, Asp229, His231, and Glu261 each coordinate Zn(2+).

This sequence belongs to the AP endonuclease 2 family. Zn(2+) is required as a cofactor.

It catalyses the reaction Endonucleolytic cleavage to 5'-phosphooligonucleotide end-products.. Functionally, endonuclease IV plays a role in DNA repair. It cleaves phosphodiester bonds at apurinic or apyrimidinic (AP) sites, generating a 3'-hydroxyl group and a 5'-terminal sugar phosphate. This Actinobacillus pleuropneumoniae serotype 7 (strain AP76) protein is Probable endonuclease 4.